The primary structure comprises 467 residues: tRNA-2-methylthio-N(6)-dimethylallyladenosine synthase (467 aa).

The MTTase N-terminal domain occupies 2–118 (PSVFIKTFGC…VAEIADNLLK (117 aa)). 6 residues coordinate [4Fe-4S] cluster: Cys-11, Cys-47, Cys-81, Cys-159, Cys-163, and Cys-166. Residues 145–379 (TKAQPIAYVS…LEIQNKITME (235 aa)) enclose the Radical SAM core domain. Residues 382 to 445 (QKWVGQVVEI…GHTFYGTPLI (64 aa)) form the TRAM domain.

It belongs to the methylthiotransferase family. MiaB subfamily. In terms of assembly, monomer. The cofactor is [4Fe-4S] cluster.

Its subcellular location is the cytoplasm. The catalysed reaction is N(6)-dimethylallyladenosine(37) in tRNA + (sulfur carrier)-SH + AH2 + 2 S-adenosyl-L-methionine = 2-methylsulfanyl-N(6)-dimethylallyladenosine(37) in tRNA + (sulfur carrier)-H + 5'-deoxyadenosine + L-methionine + A + S-adenosyl-L-homocysteine + 2 H(+). Catalyzes the methylthiolation of N6-(dimethylallyl)adenosine (i(6)A), leading to the formation of 2-methylthio-N6-(dimethylallyl)adenosine (ms(2)i(6)A) at position 37 in tRNAs that read codons beginning with uridine. This chain is tRNA-2-methylthio-N(6)-dimethylallyladenosine synthase, found in Methylacidiphilum infernorum (isolate V4) (Methylokorus infernorum (strain V4)).